A 351-amino-acid polypeptide reads, in one-letter code: Probable dual-specificity RNA methyltransferase RlmN (351 aa).

The Proton acceptor role is filled by E98. In terms of domain architecture, Radical SAM core spans 104 to 332; it reads TQKRLTVCVS…ASIRRSRGLD (229 aa). Residues C111 and C337 are joined by a disulfide bond. [4Fe-4S] cluster is bound by residues C118, C122, and C125. S-adenosyl-L-methionine-binding positions include 165 to 166, S195, 218 to 220, and N294; these read GE and SLH. C337 acts as the S-methylcysteine intermediate in catalysis.

Belongs to the radical SAM superfamily. RlmN family. It depends on [4Fe-4S] cluster as a cofactor.

The protein resides in the cytoplasm. The catalysed reaction is adenosine(2503) in 23S rRNA + 2 reduced [2Fe-2S]-[ferredoxin] + 2 S-adenosyl-L-methionine = 2-methyladenosine(2503) in 23S rRNA + 5'-deoxyadenosine + L-methionine + 2 oxidized [2Fe-2S]-[ferredoxin] + S-adenosyl-L-homocysteine. The enzyme catalyses adenosine(37) in tRNA + 2 reduced [2Fe-2S]-[ferredoxin] + 2 S-adenosyl-L-methionine = 2-methyladenosine(37) in tRNA + 5'-deoxyadenosine + L-methionine + 2 oxidized [2Fe-2S]-[ferredoxin] + S-adenosyl-L-homocysteine. Its function is as follows. Specifically methylates position 2 of adenine 2503 in 23S rRNA and position 2 of adenine 37 in tRNAs. The sequence is that of Probable dual-specificity RNA methyltransferase RlmN from Acaryochloris marina (strain MBIC 11017).